The primary structure comprises 391 residues: Multidrug resistance protein MdtL (391 aa).

At 1–3 the chain is on the cytoplasmic side; sequence MSR. A helical transmembrane segment spans residues 4–24; the sequence is FLICSFALVLLYPAGIDMYLV. Topologically, residues 25-41 are periplasmic; that stretch reads GLPRIAADLNASEAQLH. Residues 42–62 form a helical membrane-spanning segment; sequence IAFSVYLAGMAAAMLFAGKVA. Over 63-68 the chain is Cytoplasmic; that stretch reads DRSGRK. A helical membrane pass occupies residues 69–89; sequence PVAIPGAALFIIASVFCSLAE. The Periplasmic portion of the chain corresponds to 90-92; that stretch reads TST. Residues 93–113 form a helical membrane-spanning segment; sequence LFLAGRFLQGLGAGCCYVVAF. The Cytoplasmic segment spans residues 114–130; the sequence is AILRDTLDDRRRAKVLS. A helical transmembrane segment spans residues 131–151; it reads LLNGITCIIPVLAPVLGHLIM. The Periplasmic segment spans residues 152–157; the sequence is LKFPWQ. The helical transmembrane segment at 158-178 threads the bilayer; it reads SLFWTMAIMGIAVLMLSLFIL. At 179 to 198 the chain is on the cytoplasmic side; sequence KETRPAAPAASDKSRENSES. The chain crosses the membrane as a helical span at residues 199–221; it reads LLNRFFLSRVVITTLSVSVILTF. Topologically, residues 222–244 are periplasmic; sequence VNTSPVLLMEIMGFERGEYATIM. A helical membrane pass occupies residues 245–265; it reads ALTAGVSMTVSFSTPFALGIF. Topologically, residues 266 to 268 are cytoplasmic; the sequence is KPR. Residues 269–289 form a helical membrane-spanning segment; sequence TLMITSQVLFLAAGITLAVSP. The Periplasmic portion of the chain corresponds to 290–292; it reads SHA. Residues 293–313 traverse the membrane as a helical segment; that stretch reads ISLFGITLICAGFSVGFGVAM. The Cytoplasmic segment spans residues 314–330; sequence SQALGPFSLRAGVASST. A helical transmembrane segment spans residues 331–351; it reads LGIAQVCGSSLWIWLAAVVGI. Residues 352–355 lie on the Periplasmic side of the membrane; it reads GAWN. A helical membrane pass occupies residues 356–376; that stretch reads MLIGILIACSIVSLLLIMFVA. The Cytoplasmic portion of the chain corresponds to 377–391; the sequence is PGRPVAAHEEIHHHA.

The protein belongs to the major facilitator superfamily. DHA1 family. MdtL (TC 2.A.1.2.22) subfamily.

Its subcellular location is the cell inner membrane. This Shigella dysenteriae serotype 1 (strain Sd197) protein is Multidrug resistance protein MdtL.